The sequence spans 244 residues: Ribonuclease PH (244 aa).

Residues Arg87 and 125–127 (GTR) each bind phosphate.

It belongs to the RNase PH family. As to quaternary structure, homohexameric ring arranged as a trimer of dimers.

The catalysed reaction is tRNA(n+1) + phosphate = tRNA(n) + a ribonucleoside 5'-diphosphate. Functionally, phosphorolytic 3'-5' exoribonuclease that plays an important role in tRNA 3'-end maturation. Removes nucleotide residues following the 3'-CCA terminus of tRNAs; can also add nucleotides to the ends of RNA molecules by using nucleoside diphosphates as substrates, but this may not be physiologically important. Probably plays a role in initiation of 16S rRNA degradation (leading to ribosome degradation) during starvation. This Synechococcus sp. (strain JA-2-3B'a(2-13)) (Cyanobacteria bacterium Yellowstone B-Prime) protein is Ribonuclease PH.